The primary structure comprises 285 residues: Mediator of RNA polymerase II transcription subunit 4 (285 aa).

Low complexity predominate over residues 1–13; it reads MSTPGPVPSSTSV. Residues 1-25 are disordered; that stretch reads MSTPGPVPSSTSVATLPFSAQDKTQ. Residues 31–115 adopt a coiled-coil conformation; sequence ELQSVGIYQD…TREILETLNT (85 aa). The segment at 206–285 is disordered; sequence DNVNNDNNTS…DLDLFNPDEF (80 aa). Composition is skewed to basic and acidic residues over residues 216–250 and 257–267; these read KIDE…RRGS and GKEDSETKSEE. Over residues 268-285 the composition is skewed to acidic residues; the sequence is NPDLELDLDLDLFNPDEF.

It belongs to the Mediator complex subunit 4 family. In terms of assembly, component of the Mediator complex.

The protein resides in the nucleus. In terms of biological role, component of the Mediator complex, a coactivator involved in the regulated transcription of nearly all RNA polymerase II-dependent genes. Mediator functions as a bridge to convey information from gene-specific regulatory proteins to the basal RNA polymerase II transcription machinery. Mediator is recruited to promoters by direct interactions with regulatory proteins and serves as a scaffold for the assembly of a functional preinitiation complex with RNA polymerase II and the general transcription factors. The protein is Mediator of RNA polymerase II transcription subunit 4 (MED4) of Kluyveromyces lactis (strain ATCC 8585 / CBS 2359 / DSM 70799 / NBRC 1267 / NRRL Y-1140 / WM37) (Yeast).